The chain runs to 352 residues: Ferrochelatase (352 aa).

Positions 222 and 303 each coordinate Fe cation.

It belongs to the ferrochelatase family.

The protein resides in the cytoplasm. The enzyme catalyses heme b + 2 H(+) = protoporphyrin IX + Fe(2+). Its pathway is porphyrin-containing compound metabolism; protoheme biosynthesis; protoheme from protoporphyrin-IX: step 1/1. Its function is as follows. Catalyzes the ferrous insertion into protoporphyrin IX. In Brucella canis (strain ATCC 23365 / NCTC 10854 / RM-666), this protein is Ferrochelatase.